Reading from the N-terminus, the 456-residue chain is Antizyme inhibitor 2 (456 aa).

The active-site Proton donor; shared with dimeric partner is the cysteine 357.

The protein belongs to the Orn/Lys/Arg decarboxylase class-II family. ODC antizyme inhibitor subfamily. Monomer. Interacts with OAZ1; this interaction disrupts the interaction between the antizyme and ODC1. Does not form a heterodimer with ODC1.

The protein localises to the nucleus. Its subcellular location is the cytoplasm. It is found in the perinuclear region. The protein resides in the membrane. It localises to the cytoplasmic vesicle. The protein localises to the endoplasmic reticulum-Golgi intermediate compartment. Its subcellular location is the golgi apparatus. It is found in the cis-Golgi network. The protein resides in the trans-Golgi network. It localises to the cytoplasmic granule. The protein localises to the cell projection. Its subcellular location is the axon. It is found in the dendrite. The protein resides in the perikaryon. Its function is as follows. Antizyme inhibitor (AZI) protein that positively regulates ornithine decarboxylase (ODC) activity and polyamine uptake. AZI is an enzymatically inactive ODC homolog that counteracts the negative effect of ODC antizyme (AZ) on ODC activity by competing with ODC for antizyme-binding. Inhibits antizyme-dependent ODC degradation and releases ODC monomers from their inactive complex with antizymes, leading to formation of the catalytically active ODC homodimer and restoring polyamine production. Participates in the morphological integrity of the trans-Golgi network (TGN) and functions as a regulator of intracellular secretory vesicle trafficking. The protein is Antizyme inhibitor 2 (azin2) of Xenopus laevis (African clawed frog).